The following is a 158-amino-acid chain: SUMO-conjugating enzyme UBC9 (158 aa).

The UBC core domain occupies 4-157 (IALSRLAQER…VRAQAKKFAP (154 aa)). Residues 13-18 (RKAWRK) are interaction with SUMO1. Cysteine 93 acts as the Glycyl thioester intermediate in catalysis.

The protein belongs to the ubiquitin-conjugating enzyme family. In terms of assembly, interacts with SOX9.

It is found in the nucleus. It localises to the cytoplasm. The protein operates within protein modification; protein sumoylation. Accepts the ubiquitin-like proteins SUMO1, SUMO2 and SUMO3 from the UBLE1A-UBLE1B E1 complex and catalyzes their covalent attachment to other proteins with the help of an E3 ligase such as RANBP2 or CBX4. Essential for nuclear architecture and chromosome segregation. The protein is SUMO-conjugating enzyme UBC9 (UBE2I) of Gallus gallus (Chicken).